The primary structure comprises 117 residues: Large ribosomal subunit protein bL20 (117 aa).

This sequence belongs to the bacterial ribosomal protein bL20 family.

Functionally, binds directly to 23S ribosomal RNA and is necessary for the in vitro assembly process of the 50S ribosomal subunit. It is not involved in the protein synthesizing functions of that subunit. The sequence is that of Large ribosomal subunit protein bL20 from Limosilactobacillus reuteri (strain DSM 20016) (Lactobacillus reuteri).